A 606-amino-acid polypeptide reads, in one-letter code: MPDMPLRILVETIERLELVTARTQLVAFLVNLFKQTPPEIIDKVVYLVQGILWPDWKGMPELGVGEKMLIKAISLACNISEREVEKTAKEIGDIGKATEKLKQTAQSKQTGLTIFAFTQQPTGLTVTNTYNTLVKIAMAQGEGSKDLKIRLLAGLLKDASPKEAKFIVKFVEGKLRVGIGDATIMDALAVTFGGGVANRPVIERAYNLRSDLGEVAKILASKGIEELKKIKPEVGVPIRPMLAERLSDPREILVKTGGEAFVEYKYDGERAQIHKKGDKIWIYSRRLENITSQYPDVVERALEKIKADEAIVEGEIVVYDPDTGELKPFQELMHRKRKHDIRQAIKEYPVKVFLFDLLYLNGEDYTLKPLPVRREALEKIIDKTEDFTIAEYIKTSNPEELEKFFLEAIGNGVEGVMAKAIHKDSIYQAGVRGWLWIKYKRDYKSEMADTVDLVVVGAFYGKGRRGGKYGALLMAAYNKEKDVFETVCKVGSGFKDEDLDKLPDMLKPYIRDRKHPRVVAEIEPDVWVDPVLVAEIIGAELTLSPIHTCAKGVIKPDAGISIRFPRFIRWRPDKRPEDATTSSELVEMYQRQLKKITTEQATQEQL.

Residue Glu-263 participates in ATP binding. The active-site N6-AMP-lysine intermediate is Lys-265. Positions 270, 285, 315, 355, 432, and 438 each coordinate ATP.

It belongs to the ATP-dependent DNA ligase family. Mg(2+) is required as a cofactor. The cofactor is Mn(2+).

It carries out the reaction ATP + (deoxyribonucleotide)n-3'-hydroxyl + 5'-phospho-(deoxyribonucleotide)m = (deoxyribonucleotide)n+m + AMP + diphosphate.. The enzyme catalyses ADP + (deoxyribonucleotide)n-3'-hydroxyl + 5'-phospho-(deoxyribonucleotide)m = (deoxyribonucleotide)n+m + AMP + phosphate.. It catalyses the reaction GTP + (deoxyribonucleotide)n-3'-hydroxyl + 5'-phospho-(deoxyribonucleotide)m = (deoxyribonucleotide)n+m + GMP + diphosphate.. Its function is as follows. DNA ligase that seals nicks in double-stranded DNA during DNA replication, DNA recombination and DNA repair. Can use ATP, ADP and GTP, but not CTP, TTP or NAD(+). This Sulfophobococcus zilligii protein is DNA ligase.